We begin with the raw amino-acid sequence, 917 residues long: MELSSAEAVSTRFLGLTQRSVSEDLGCRRGEFSRKHYGSVELLISSDADGAIQRAGRFRVENGSSDENTGYTPGTWHRTDVHLENPEYYTRWYFKYFLGKVHQNYIGTDSEKNPFFLSVVLSDQNNQRVPQYHSILWRKTGTQKICLPYSPTKTLSVKSILSAMSLEKFEKGPREIFHPDIQKDLLVLEEQEGSVNFKFGVLYAKDGQLTDDEMFSNETGSESFQRFLHLLGDTITLKGWTGYRGGLDTKNDTTGTFSIYTVYQGHEIMFHVSTMLPYSRENKQQVERKRHIGNDIVTIVFQEGEETAPAFKPSMIRSHFTHIFALVRYNKQNDSYRLKIFSEESVPLFGPPLPSPPVFTNHQEFRDFVLVKLINGEKATLETPTFSQKRQRTLDMLIRSLYQDLMPDLHKNMLNRRSFSDVLPDSPKSTRKKEEARQAEFVRLGQALKLKTGVKGDAPTTLATTSFCKKEPWESQSFCSNFPHEVVCADSWGQSLLVSTDAGILLIDDGQTTVQVFDKTLQIKQMHVLEALDYLIARTDKGKDSRLLVFRLSSVQKDIETKQVIRSKYDCRENKLERTKGCHLYAINTHHSSELRIVVAIRNKLLLITKKYNPCNSLTGSSLSLSESPVEEFQYIREICLSDPPVVMTLVDGPTGDSDNMICVAYRHQFDLVNESTGESYRLHHIEANKVNFVAAIDVYEDGEAGLLLCYNYVCQYRKVYPFNGGSPLIQPSAYDFHFSWNQVPYAVVCAFPYILAFTTDSIEIRLVVNGNLVHTAVVPELQLVASRSDIYFKATAAVSGSSHSSSKEMSSRSSPQTPTAYDMLECSLSSSEGEVACKNLYKIPLSNLVGRSIERPLKSPLTPKVVTTPTSSGITSLPVTHSPSLSRMEIKEIANRTRKELLGKLPLFFSVYISYH.

Residues 185–401 (LLVLEEQEGS…RTLDMLIRSL (217 aa)) enclose the Rap-GAP domain. The region spanning 483 to 792 (PHEVVCADSW…QLVASRSDIY (310 aa)) is the CNH domain.

This sequence belongs to the GARNL3 family.

The polypeptide is GTPase-activating Rap/Ran-GAP domain-like protein 3 (GARNL3) (Gallus gallus (Chicken)).